We begin with the raw amino-acid sequence, 201 residues long: Recombination protein RecR (201 aa).

Residues 57-72 (CADCRTFTEQEVCNIC) form a C4-type zinc finger. Residues 81–176 (GQICVVESPA…EASRIAHGVP (96 aa)) form the Toprim domain.

It belongs to the RecR family.

In terms of biological role, may play a role in DNA repair. It seems to be involved in an RecBC-independent recombinational process of DNA repair. It may act with RecF and RecO. This is Recombination protein RecR from Salmonella arizonae (strain ATCC BAA-731 / CDC346-86 / RSK2980).